A 507-amino-acid chain; its full sequence is NADH-quinone oxidoreductase subunit N (507 aa).

Transmembrane regions (helical) follow at residues 17–37 (LVTL…MLTA), 46–66 (VMIL…LSQG), 81–101 (YALF…ILCY), 113–133 (ALYI…ASSH), 134–154 (FASF…LIAY), 168–188 (YLIL…LVYA), 190–210 (LGTM…AALE), 211–231 (LYGL…LALV), 245–265 (PVPI…VLLL), 279–299 (ITFA…LLAL), 307–327 (ILAY…LAFD), 334–354 (VAYF…VVTV), 392–412 (AGVF…MGFI), 425–445 (SLWM…FYYM), and 478–498 (LAAL…LIGV).

Belongs to the complex I subunit 2 family. NDH-1 is composed of 14 different subunits. Subunits NuoA, H, J, K, L, M, N constitute the membrane sector of the complex.

It is found in the cell inner membrane. The catalysed reaction is a quinone + NADH + 5 H(+)(in) = a quinol + NAD(+) + 4 H(+)(out). Functionally, NDH-1 shuttles electrons from NADH, via FMN and iron-sulfur (Fe-S) centers, to quinones in the respiratory chain. The immediate electron acceptor for the enzyme in this species is believed to be ubiquinone. Couples the redox reaction to proton translocation (for every two electrons transferred, four hydrogen ions are translocated across the cytoplasmic membrane), and thus conserves the redox energy in a proton gradient. In Nitrosospira multiformis (strain ATCC 25196 / NCIMB 11849 / C 71), this protein is NADH-quinone oxidoreductase subunit N.